The following is a 27-amino-acid chain: iraD leader peptide (27 aa).

In terms of biological role, a short protein whose stop codon overlaps with the start codon of downstream iraD; its mRNA secondary structure is predicted to fold and sequester the Shine-Dalgarno sequence of iraD. When this protein is expressed the downstream iraD is also expressed due to ribosomal coupling. The protein is iraD leader peptide (idlP) of Escherichia coli (strain K12).